The following is a 494-amino-acid chain: Glycerol kinase (494 aa).

Thr-12 lines the ADP pocket. Positions 12, 13, and 14 each coordinate ATP. Thr-12 contacts sn-glycerol 3-phosphate. Residue Arg-16 participates in ADP binding. Positions 82, 83, 134, and 244 each coordinate sn-glycerol 3-phosphate. Residues Arg-82, Glu-83, Tyr-134, Asp-244, and Gln-245 each coordinate glycerol. ADP contacts are provided by Thr-266 and Gly-309. Residues Thr-266, Gly-309, Gln-313, and Gly-410 each contribute to the ATP site. ADP-binding residues include Gly-410 and Asn-414.

It belongs to the FGGY kinase family. Homotetramer and homodimer (in equilibrium).

It catalyses the reaction glycerol + ATP = sn-glycerol 3-phosphate + ADP + H(+). It participates in polyol metabolism; glycerol degradation via glycerol kinase pathway; sn-glycerol 3-phosphate from glycerol: step 1/1. With respect to regulation, activated by phosphorylation and inhibited by fructose 1,6-bisphosphate (FBP). In terms of biological role, key enzyme in the regulation of glycerol uptake and metabolism. Catalyzes the phosphorylation of glycerol to yield sn-glycerol 3-phosphate. The sequence is that of Glycerol kinase from Desulfitobacterium hafniense (strain DSM 10664 / DCB-2).